We begin with the raw amino-acid sequence, 597 residues long: Elongation factor 4 (597 aa).

The region spanning 2-184 is the tr-type G domain; it reads KHIRNFSIIA…KIVSAIPAPE (183 aa). Residues 14 to 19 and 131 to 134 each bind GTP; these read DHGKST and NKID.

Belongs to the TRAFAC class translation factor GTPase superfamily. Classic translation factor GTPase family. LepA subfamily.

It is found in the cell inner membrane. The enzyme catalyses GTP + H2O = GDP + phosphate + H(+). Functionally, required for accurate and efficient protein synthesis under certain stress conditions. May act as a fidelity factor of the translation reaction, by catalyzing a one-codon backward translocation of tRNAs on improperly translocated ribosomes. Back-translocation proceeds from a post-translocation (POST) complex to a pre-translocation (PRE) complex, thus giving elongation factor G a second chance to translocate the tRNAs correctly. Binds to ribosomes in a GTP-dependent manner. In Vibrio vulnificus (strain CMCP6), this protein is Elongation factor 4.